The primary structure comprises 155 residues: Protein E6 (155 aa).

2 zinc fingers span residues 33 to 69 and 106 to 142; these read CVYCKKELTRAEVYNFACTELKLVYRDDFPYAVCRVC and CYRCQSPLTPEEKQLHCDRKRRFHLIAHGWTGSCLGC.

The protein belongs to the papillomaviridae E6 protein family. In terms of assembly, forms homodimers. Interacts with ubiquitin-protein ligase UBE3A/E6-AP; this interaction stimulates UBE3A ubiquitin activity. Interacts with host TP53 and EP300; this interaction inhibits TP53 activity.

Its subcellular location is the host cytoplasm. The protein resides in the host nucleus. This protein has transforming activity in vitro. Its function is as follows. Plays a major role in the induction and maintenance of cellular transformation. E6 associates with host UBE3A/E6-AP ubiquitin-protein ligase and modulates its activity. Sequesters tumor suppressor TP53 in the host cytoplasm and modulates its activity by interacting with host EP300 that results in the reduction of TP53 acetylation and activation. In turn, apoptosis induced by DNA damage is inhibited. E6 also protects host keratinocytes from apoptosis by mediating the degradation of host BAK1. May also inhibit host immune response. The sequence is that of Protein E6 from Human papillomavirus 56.